The sequence spans 492 residues: Catalase isozyme 2 (492 aa).

Residues His65 and Asn138 contribute to the active site. Tyr348 provides a ligand contact to heme.

The protein belongs to the catalase family. In terms of assembly, homotetramer. Heme is required as a cofactor.

The protein localises to the peroxisome. It carries out the reaction 2 H2O2 = O2 + 2 H2O. Its function is as follows. Occurs in almost all aerobically respiring organisms and serves to protect cells from the toxic effects of hydrogen peroxide. This chain is Catalase isozyme 2 (CAT2), found in Solanum lycopersicum (Tomato).